Here is a 350-residue protein sequence, read N- to C-terminus: Histidinol-phosphate aminotransferase (350 aa).

N6-(pyridoxal phosphate)lysine is present on Lys220.

This sequence belongs to the class-II pyridoxal-phosphate-dependent aminotransferase family. Histidinol-phosphate aminotransferase subfamily. Homodimer. Pyridoxal 5'-phosphate serves as cofactor.

The catalysed reaction is L-histidinol phosphate + 2-oxoglutarate = 3-(imidazol-4-yl)-2-oxopropyl phosphate + L-glutamate. Its pathway is amino-acid biosynthesis; L-histidine biosynthesis; L-histidine from 5-phospho-alpha-D-ribose 1-diphosphate: step 7/9. The chain is Histidinol-phosphate aminotransferase from Macrococcus caseolyticus (strain JCSC5402) (Macrococcoides caseolyticum).